Here is a 307-residue protein sequence, read N- to C-terminus: Geranylgeranyl diphosphate synthase (307 aa).

Isopentenyl diphosphate-binding residues include Lys-52, Arg-55, and His-86. Residues Asp-93 and Asp-99 each contribute to the Mg(2+) site. Arg-104 contributes to the (2E,6E)-farnesyl diphosphate binding site. Residue Arg-105 coordinates isopentenyl diphosphate. The (2E,6E)-farnesyl diphosphate site is built by Lys-188, Thr-189, and Gln-226.

The protein belongs to the FPP/GGPP synthase family. Mg(2+) serves as cofactor.

It catalyses the reaction isopentenyl diphosphate + (2E,6E)-farnesyl diphosphate = (2E,6E,10E)-geranylgeranyl diphosphate + diphosphate. It functions in the pathway isoprenoid biosynthesis; geranylgeranyl diphosphate biosynthesis; geranylgeranyl diphosphate from farnesyl diphosphate and isopentenyl diphosphate: step 1/1. Its function is as follows. Catalyzes the condensation of farnesyl diphosphate (FPP) and isopentenyl diphosphate (IPP) to yield geranylgeranyl diphosphate (GGPP) needed for biosynthesis of carotenoids and diterpenes. This chain is Geranylgeranyl diphosphate synthase (crtE), found in Pseudescherichia vulneris (Escherichia vulneris).